The chain runs to 203 residues: Proteasome subunit beta 1 (203 aa).

Positions 1–7 (MTEKLKG) are cleaved as a propeptide — removed in mature form; by autocatalysis. T8 acts as the Nucleophile in catalysis.

It belongs to the peptidase T1B family. As to quaternary structure, the 20S proteasome core is composed of 14 alpha and 14 beta subunits that assemble into four stacked heptameric rings, resulting in a barrel-shaped structure. The two inner rings, each composed of seven catalytic beta subunits, are sandwiched by two outer rings, each composed of seven alpha subunits. The catalytic chamber with the active sites is on the inside of the barrel. Has a gated structure, the ends of the cylinder being occluded by the N-termini of the alpha-subunits. Is capped at one or both ends by the proteasome regulatory ATPase, PAN.

Its subcellular location is the cytoplasm. The catalysed reaction is Cleavage of peptide bonds with very broad specificity.. With respect to regulation, the formation of the proteasomal ATPase PAN-20S proteasome complex, via the docking of the C-termini of PAN into the intersubunit pockets in the alpha-rings, triggers opening of the gate for substrate entry. Interconversion between the open-gate and close-gate conformations leads to a dynamic regulation of the 20S proteasome proteolysis activity. Its function is as follows. Component of the proteasome core, a large protease complex with broad specificity involved in protein degradation. The polypeptide is Proteasome subunit beta 1 (Thermococcus kodakarensis (strain ATCC BAA-918 / JCM 12380 / KOD1) (Pyrococcus kodakaraensis (strain KOD1))).